Here is a 392-residue protein sequence, read N- to C-terminus: Heat-inducible transcription repressor HrcA (392 aa).

The protein belongs to the HrcA family.

Functionally, negative regulator of class I heat shock genes (grpE-dnaK-dnaJ and groELS operons). Prevents heat-shock induction of these operons. The sequence is that of Heat-inducible transcription repressor HrcA from Chlamydia trachomatis serovar A (strain ATCC VR-571B / DSM 19440 / HAR-13).